The sequence spans 1204 residues: Cingulin (1204 aa).

The tract at residues 7–359 (MAEPRGPVDH…VMMSSGSSKA (353 aa)) is head. Residues 25–48 (EPVSGAEMGTLRRGGRRPAKDARA) are disordered. The ZIM signature appears at 48–62 (ASTYGVAVRVQGIAG). The tract at residues 54–67 (AVRVQGIAGQPFVV) is interaction with TJP1/ZO1. A disordered region spans residues 68–269 (LNSGEKGGDS…SPLSGLSRAR (202 aa)). Residues serine 95, serine 96, serine 98, serine 135, serine 137, serine 140, serine 155, and serine 165 each carry the phosphoserine modification. The segment covering 126–140 (TQWNGKLLRSQSQAS) has biased composition (polar residues). A compositionally biased stretch (polar residues) spans 166–190 (PGSTIDTAPLSSVDSLINKFDSQLR). Residues 207 to 231 (EQRKRSKSLDSRLPRDTLEERERQS) are compositionally biased toward basic and acidic residues. Phosphoserine occurs at positions 214, 217, 260, 278, 340, and 353. A coiled-coil region spans residues 360–1161 (VAGQGELTRK…SLEKDSWRKA (802 aa)). An N6-acetyllysine modification is found at lysine 581. The tract at residues 1156–1182 (DSWRKASRSAAESTLKHEGLSSDEEFD) is disordered. Residues 1162-1204 (SRSAAESTLKHEGLSSDEEFDGVYDPSSIASLLTESNLQTSSC) form a tail region. A phosphoserine mark is found at serine 1176 and serine 1177.

It belongs to the cingulin family. As to quaternary structure, homodimer. Interacts with TJP1/ZO1 and SPEF1.

It localises to the cell junction. The protein localises to the tight junction. Probably plays a role in the formation and regulation of the tight junction (TJ) paracellular permeability barrier. This is Cingulin from Callithrix jacchus (White-tufted-ear marmoset).